The chain runs to 144 residues: Macromomycin (144 aa).

A signal peptide spans 1 to 32 (MLQNTSRFLARAGATVGVAAGLAFSLPADRDG). 2 disulfide bridges follow: cysteine 68/cysteine 78 and cysteine 120/cysteine 125.

The protein belongs to the neocarzinostatin family.

In terms of biological role, binds non-covalently to a chromophore which is the cytotoxic and mutagenic component of the antibiotic. The chromophore binds to DNA as a weak intercalator and causes single- and double-strand breaks. The protein is Macromomycin of Streptomyces macromomyceticus.